Consider the following 107-residue polypeptide: Iron-sulfur cluster assembly protein CyaY (107 aa).

It belongs to the frataxin family.

Functionally, involved in iron-sulfur (Fe-S) cluster assembly. May act as a regulator of Fe-S biogenesis. This chain is Iron-sulfur cluster assembly protein CyaY, found in Yersinia pseudotuberculosis serotype O:1b (strain IP 31758).